We begin with the raw amino-acid sequence, 117 residues long: Prefoldin subunit beta (117 aa).

This sequence belongs to the prefoldin subunit beta family. Heterohexamer of two alpha and four beta subunits.

The protein resides in the cytoplasm. Its function is as follows. Molecular chaperone capable of stabilizing a range of proteins. Seems to fulfill an ATP-independent, HSP70-like function in archaeal de novo protein folding. The chain is Prefoldin subunit beta from Pyrococcus furiosus (strain ATCC 43587 / DSM 3638 / JCM 8422 / Vc1).